The sequence spans 309 residues: Early nodulin-75 (309 aa).

A signal peptide spans M1–A25. The segment covering P56 to Q67 has biased composition (pro residues). Residues P56–N309 are disordered. Basic and acidic residues-rich tracts occupy residues P81 to P210 and K219 to P247. Composition is skewed to pro residues over residues P248–P276 and I283–R302.

This sequence belongs to the nodulin 75 family.

Its function is as follows. Involved in early stages of root nodule development. This chain is Early nodulin-75 (ENOD2A), found in Glycine max (Soybean).